The chain runs to 457 residues: Siroheme synthase (457 aa).

Residues 1-204 form a precorrin-2 dehydrogenase /sirohydrochlorin ferrochelatase region; sequence MDHLPIFCQL…NDQKAITETT (204 aa). NAD(+) is bound by residues 22–23 and 43–44; these read DV and LA. Residue serine 128 is modified to Phosphoserine. A uroporphyrinogen-III C-methyltransferase region spans residues 216–457; sequence GEVVLVGAGP…RDKLNWFSNH (242 aa). S-adenosyl-L-methionine is bound at residue proline 225. The active-site Proton acceptor is the aspartate 248. Lysine 270 serves as the catalytic Proton donor. S-adenosyl-L-methionine is bound by residues 301-303, isoleucine 306, 331-332, methionine 382, and glycine 411; these read GGD and TA.

It in the N-terminal section; belongs to the precorrin-2 dehydrogenase / sirohydrochlorin ferrochelatase family. This sequence in the C-terminal section; belongs to the precorrin methyltransferase family.

The enzyme catalyses uroporphyrinogen III + 2 S-adenosyl-L-methionine = precorrin-2 + 2 S-adenosyl-L-homocysteine + H(+). The catalysed reaction is precorrin-2 + NAD(+) = sirohydrochlorin + NADH + 2 H(+). It carries out the reaction siroheme + 2 H(+) = sirohydrochlorin + Fe(2+). It participates in cofactor biosynthesis; adenosylcobalamin biosynthesis; precorrin-2 from uroporphyrinogen III: step 1/1. The protein operates within cofactor biosynthesis; adenosylcobalamin biosynthesis; sirohydrochlorin from precorrin-2: step 1/1. It functions in the pathway porphyrin-containing compound metabolism; siroheme biosynthesis; precorrin-2 from uroporphyrinogen III: step 1/1. Its pathway is porphyrin-containing compound metabolism; siroheme biosynthesis; siroheme from sirohydrochlorin: step 1/1. It participates in porphyrin-containing compound metabolism; siroheme biosynthesis; sirohydrochlorin from precorrin-2: step 1/1. Multifunctional enzyme that catalyzes the SAM-dependent methylations of uroporphyrinogen III at position C-2 and C-7 to form precorrin-2 via precorrin-1. Then it catalyzes the NAD-dependent ring dehydrogenation of precorrin-2 to yield sirohydrochlorin. Finally, it catalyzes the ferrochelation of sirohydrochlorin to yield siroheme. This Escherichia coli O6:H1 (strain CFT073 / ATCC 700928 / UPEC) protein is Siroheme synthase.